We begin with the raw amino-acid sequence, 356 residues long: Alpha-N-acetylneuraminide alpha-2,8-sialyltransferase (356 aa).

Residues 1-29 (MSPCGRARRQTSRGAMAVLAWKFPRTRLP) lie on the Cytoplasmic side of the membrane. The helical; Signal-anchor for type II membrane protein transmembrane segment at 30 to 48 (MGASALCVVVLCWLYIFPV) threads the bilayer. Residues 49 to 356 (YRLPNEKEIV…CEDTSLQPTS (308 aa)) lie on the Lumenal side of the membrane. Residues Asn71 and Asn119 are each glycosylated (N-linked (GlcNAc...) asparagine). 2 disulfide bridges follow: Cys138-Cys287 and Cys152-Cys347. Asn143 and Asn166 together coordinate CMP-N-acetyl-beta-neuraminate. Residues Asn214 and Asn245 are each glycosylated (N-linked (GlcNAc...) asparagine). Positions 274, 275, 276, 296, and 310 each coordinate CMP-N-acetyl-beta-neuraminate. The active-site Proton donor/acceptor is His322.

The protein belongs to the glycosyltransferase 29 family.

The protein localises to the golgi apparatus membrane. The enzyme catalyses an N-acetyl-alpha-neuraminyl-(2-&gt;3)-beta-D-galactosyl derivative + CMP-N-acetyl-beta-neuraminate = an N-acetyl-alpha-neuraminyl-(2-&gt;8)-N-acetyl-alpha-neuraminyl-(2-&gt;3)-beta-D-galactosyl derivative + CMP + H(+). It carries out the reaction a ganglioside GM3 (d18:1(4E)) + CMP-N-acetyl-beta-neuraminate = a ganglioside GD3 (d18:1(4E)) + CMP + H(+). It catalyses the reaction a ganglioside GD3 (d18:1(4E)) + CMP-N-acetyl-beta-neuraminate = a ganglioside GT3 (d18:1(4E)) + CMP + H(+). The catalysed reaction is a ganglioside GD1a (d18:1(4E)) + CMP-N-acetyl-beta-neuraminate = a ganglioside GT1a (d18:1(4E)) + CMP + H(+). The enzyme catalyses a ganglioside GT1b (d18:1(4E)) + CMP-N-acetyl-beta-neuraminate = a ganglioside GQ1b (d18:1(4E)) + CMP + H(+). It carries out the reaction a ganglioside GM1b (d18:1(4E)) + CMP-N-acetyl-beta-neuraminate = a ganglioside GD1c (d18:1(4E)) + CMP + H(+). It catalyses the reaction a ganglioside GD3 + CMP-N-acetyl-beta-neuraminate = a ganglioside GT3 + CMP + H(+). The catalysed reaction is [alpha-N-acetylneuraminyl-(2-&gt;8)](n)-alpha-N-acetylneuraminyl-(2-&gt;8)-alpha-N-acetylneuraminyl-(2-&gt;3)-beta-D-galactosyl-(1-&gt;4)-beta-D-glucosyl-(1&lt;-&gt;1)-ceramide + CMP-N-acetyl-beta-neuraminate = [alpha-N-acetylneuraminyl-(2-&gt;8)](n+1)-alpha-N-acetylneuraminyl-(2-&gt;8)-alpha-N-acetylneuraminyl-(2-&gt;3)-beta-D-galactosyl-(1-&gt;4)-beta-D-glucosyl-(1&lt;-&gt;1)-ceramide + CMP + H(+). It functions in the pathway protein modification; protein glycosylation. Its pathway is lipid metabolism; sphingolipid metabolism. In terms of biological role, catalyzes the addition of sialic acid in alpha 2,8-linkage to the sialic acid moiety of the ganglioside GM3 to form ganglioside GD3; gangliosides are a subfamily of complex glycosphingolipds that contain one or more residues of sialic acid. Can catalyze the addition of a second alpha-2,8- sialic acid to GD3 to form GT3. Can use GM1b, GD1a and GT1b as acceptor substrates to synthesize GD1c, GT1a and GQ1b respectively. This chain is Alpha-N-acetylneuraminide alpha-2,8-sialyltransferase, found in Pan troglodytes (Chimpanzee).